Reading from the N-terminus, the 190-residue chain is DNA dC-&gt;dU-editing enzyme APOBEC-3C (190 aa).

The CMP/dCMP-type deaminase domain occupies 29–138 (DRNETWLCFT…TDYQEGLRSL (110 aa)). 3 residues coordinate Zn(2+): H66, C97, and C100.

It belongs to the cytidine and deoxycytidylate deaminase family. In terms of assembly, homodimer. Interacts with TRIB3. Zn(2+) serves as cofactor.

Its subcellular location is the nucleus. The protein resides in the cytoplasm. The enzyme catalyses a 2'-deoxycytidine in single-stranded DNA + H2O + H(+) = a 2'-deoxyuridine in single-stranded DNA + NH4(+). In terms of biological role, DNA deaminase (cytidine deaminase) which acts as an inhibitor of retrovirus replication and retrotransposon mobility via deaminase-dependent and -independent mechanisms. May also play a role in the epigenetic regulation of gene expression through the process of active DNA demethylation. The protein is DNA dC-&gt;dU-editing enzyme APOBEC-3C (APOBEC3C) of Gorilla gorilla gorilla (Western lowland gorilla).